The primary structure comprises 298 residues: HTH-type transcriptional regulator ArgP (298 aa).

The 57-residue stretch at 4–60 (LDYKWIEALDAVVAQGGFERAAEELYISQSAVSQRIKQLERFLAQSVLIREQPPKPT) folds into the HTH lysR-type domain. The segment at residues 21–40 (FERAAEELYISQSAVSQRIK) is a DNA-binding region (H-T-H motif).

Belongs to the LysR transcriptional regulatory family. As to quaternary structure, homodimer.

In terms of biological role, controls the transcription of genes involved in arginine and lysine metabolism. The protein is HTH-type transcriptional regulator ArgP of Vibrio vulnificus (strain YJ016).